The sequence spans 175 residues: Small ribosomal subunit protein uS5 (175 aa).

Residues M1–R21 are disordered. Residues M20–V83 enclose the S5 DRBM domain.

This sequence belongs to the universal ribosomal protein uS5 family. In terms of assembly, part of the 30S ribosomal subunit. Contacts proteins S4 and S8.

With S4 and S12 plays an important role in translational accuracy. Its function is as follows. Located at the back of the 30S subunit body where it stabilizes the conformation of the head with respect to the body. The sequence is that of Small ribosomal subunit protein uS5 from Dechloromonas aromatica (strain RCB).